Consider the following 116-residue polypeptide: Large ribosomal subunit protein bL17 (116 aa).

The protein belongs to the bacterial ribosomal protein bL17 family. Part of the 50S ribosomal subunit. Contacts protein L32.

The sequence is that of Large ribosomal subunit protein bL17 from Synechococcus sp. (strain CC9311).